We begin with the raw amino-acid sequence, 175 residues long: RNA pyrophosphohydrolase (175 aa).

One can recognise a Nudix hydrolase domain in the interval 6 to 149 (GYRPNVGIVI…KRDVYRRVMK (144 aa)). Residues 38-59 (GGINPGETPEQAMYRELFEEVG) carry the Nudix box motif.

The protein belongs to the Nudix hydrolase family. RppH subfamily. It depends on a divalent metal cation as a cofactor.

In terms of biological role, accelerates the degradation of transcripts by removing pyrophosphate from the 5'-end of triphosphorylated RNA, leading to a more labile monophosphorylated state that can stimulate subsequent ribonuclease cleavage. This chain is RNA pyrophosphohydrolase, found in Yersinia pseudotuberculosis serotype O:1b (strain IP 31758).